Consider the following 95-residue polypeptide: Co-chaperonin GroES (95 aa).

It belongs to the GroES chaperonin family. As to quaternary structure, heptamer of 7 subunits arranged in a ring. Interacts with the chaperonin GroEL.

The protein resides in the cytoplasm. Together with the chaperonin GroEL, plays an essential role in assisting protein folding. The GroEL-GroES system forms a nano-cage that allows encapsulation of the non-native substrate proteins and provides a physical environment optimized to promote and accelerate protein folding. GroES binds to the apical surface of the GroEL ring, thereby capping the opening of the GroEL channel. This Xylella fastidiosa (strain M23) protein is Co-chaperonin GroES.